Here is a 313-residue protein sequence, read N- to C-terminus: UPF0252 protein AF_0384 (313 aa).

The protein belongs to the UPF0252 family.

The chain is UPF0252 protein AF_0384 from Archaeoglobus fulgidus (strain ATCC 49558 / DSM 4304 / JCM 9628 / NBRC 100126 / VC-16).